Consider the following 353-residue polypeptide: Phospho-N-acetylmuramoyl-pentapeptide-transferase (353 aa).

A run of 10 helical transmembrane segments spans residues 24–44 (LGFF…ILWA), 66–86 (TPTM…VLCA), 88–108 (LGNL…FVGF), 129–149 (FGML…KGLD), 160–180 (PLFE…FLST), 192–212 (GLAS…VYVA), 229–249 (VGEL…FLWY), 256–276 (VFMG…NAIV), 281–301 (ILLV…ILQV), and 330–350 (KVIV…LLSL).

Belongs to the glycosyltransferase 4 family. MraY subfamily. Mg(2+) serves as cofactor.

The protein localises to the cell inner membrane. The catalysed reaction is UDP-N-acetyl-alpha-D-muramoyl-L-alanyl-gamma-D-glutamyl-meso-2,6-diaminopimeloyl-D-alanyl-D-alanine + di-trans,octa-cis-undecaprenyl phosphate = di-trans,octa-cis-undecaprenyl diphospho-N-acetyl-alpha-D-muramoyl-L-alanyl-D-glutamyl-meso-2,6-diaminopimeloyl-D-alanyl-D-alanine + UMP. It functions in the pathway cell wall biogenesis; peptidoglycan biosynthesis. Functionally, catalyzes the initial step of the lipid cycle reactions in the biosynthesis of the cell wall peptidoglycan: transfers peptidoglycan precursor phospho-MurNAc-pentapeptide from UDP-MurNAc-pentapeptide onto the lipid carrier undecaprenyl phosphate, yielding undecaprenyl-pyrophosphoryl-MurNAc-pentapeptide, known as lipid I. This chain is Phospho-N-acetylmuramoyl-pentapeptide-transferase, found in Helicobacter pylori (strain ATCC 700392 / 26695) (Campylobacter pylori).